The sequence spans 785 residues: Tripartite terminase subunit 1 (785 aa).

The C3H1-type zinc finger occupies 197–225 (CAVCFEELCVTANQGATIARRLADRICNH). Residues 433–489 (GGAADAPKGGAGPDDDGDRVAVEEGTRGLGAPGGGGEDEDRRRGPGGQGPETWGDIA) form a disordered region. 696–703 (FASVYRCG) is an ATP binding site.

This sequence belongs to the herpesviridae TRM1 protein family. Associates with TRM2 and TRM3 to form the tripartite terminase complex. Interacts with portal protein.

It is found in the host nucleus. Its function is as follows. Component of the molecular motor that translocates viral genomic DNA in empty capsid during DNA packaging. Forms a tripartite terminase complex together with TRM2 and TRM3 in the host cytoplasm. Once the complex reaches the host nucleus, it interacts with the capsid portal vertex. This portal forms a ring in which genomic DNA is translocated into the capsid. TRM1 carries an endonuclease activity that plays an important role for the cleavage of concatemeric viral DNA into unit length genomes. The sequence is that of Tripartite terminase subunit 1 from Human herpesvirus 1 (strain Angelotti) (HHV-1).